Reading from the N-terminus, the 513-residue chain is Acyltransferase uat1 (513 aa).

Catalysis depends on H158, which acts as the Proton acceptor.

It belongs to the plant acyltransferase family.

The protein operates within secondary metabolite biosynthesis. Acyltransferase; part of the gene cluster that mediates the biosynthesis of the glycolipid biosurfactant ustilagic acid (UA). UA is a secreted cellobiose glycolipid that is toxic for many microorganisms and confers biocontrol activity to U.maydis. UA consists of 15,16-dihydroxypalmitic or 2,15,16-trihydroxypalmitic acid, which is O-glycosidically linked to cellobiose at its terminal hydroxyl group. In addition, the cellobiose moiety is acetylated and acylated with a short-chain hydroxy fatty acid. UA biosynthesis starts with omega-hydroxylation of palmitic acid catalyzed by the cytochrome P450 monooxygenase cyp1. Terminal hydroxylation of palmitic acid precedes subterminal hydroxylation catalyzed by the cytochrome P450 monooxygenase cyp2. Sequential glucosylation of the hydroxy fatty acid is probably catalyzed by the glycosyltransferase ugt1. The cellobiose lipid is further decorated by acetylation of the proximal glucose residue and by acylation with a short-chain beta-hydroxy fatty acid at the distal glucose residue. The acyltransferase uat1 may be a good candidate for catalyzing either acetylation or acylation of the cellobiose lipid. The fatty acid synthase fas2 may be involved in synthesis of the carbon backbone of the short-chain beta-hydroxy fatty acid esterified to the cellobiose disaccharide. The secreted UA consists of a mixture of both alpha-hydroxylated and non-hydroxylated glycolipids; therefore, alpha-hydroxylation of the long-chain fatty, catalyzed by the fatty acid hydroxylase ahd1, occurs late in UA biosynthesis and may be the last step before secretion. The sequence is that of Acyltransferase uat1 from Mycosarcoma maydis (Corn smut fungus).